A 1715-amino-acid polypeptide reads, in one-letter code: Rho guanine nucleotide exchange factor TIAM2 (1715 aa).

2 stretches are compositionally biased toward polar residues: residues 1 to 22 (MGNS…TVTG) and 218 to 229 (GSPSSQRPSPTD). 4 disordered regions span residues 1-27 (MGNS…KQKP), 174-249 (FHNG…WYDS), 263-294 (SFLA…SSLS), and 385-418 (TGSL…NAEG). Gly2 carries N-myristoyl glycine lipidation. Residues 235 to 245 (SKGSSLSSESS) show a composition bias toward low complexity. Basic and acidic residues predominate over residues 395-411 (LQEPRSMEGSEYFDSHS). A PH 1 domain is found at 504–618 (VVRKAGWLFF…WVTAIHSACA (115 aa)). Residues 665 to 692 (PKNRKAIENQIRQWEQNLEKFHMDLFRM) adopt a coiled-coil conformation. An RBD domain is found at 831-902 (VQTYVHFQDN…YMQEQVYDEI (72 aa)). In terms of domain architecture, PDZ spans 911-997 (DVQLTKTGDM…GLTLVARPVT (87 aa)). Residues 1092–1113 (THTNSMEAPTESHDPPPRPLAR) form a disordered region. Residues 1120-1314 (RLRKVIQELV…EKVASHINEM (195 aa)) enclose the DH domain. Residues 1347–1478 (LLMHSTVSWL…KVIRSILREN (132 aa)) enclose the PH 2 domain. Residues 1515-1582 (SLKGLRTSSS…EGLAEFPDGL (68 aa)) form a disordered region. Residues 1522 to 1532 (SSSSEWPSEPS) are compositionally biased toward low complexity. Over residues 1533–1552 (KGNSLDSDECSLSSGTQSSG) the composition is skewed to polar residues. Residues 1557–1572 (ESRRDSKSTELEKDAQ) are compositionally biased toward basic and acidic residues. Ser1604 is subject to Phosphoserine. Thr1662 is subject to Phosphothreonine.

The protein belongs to the TIAM family. Interacts with MAP1A, MAP1B, PARP1 and YWHAE. Interacts with CD44, PARD3 and MAPK8IP2. Phosphorylated on serine and threonine residues. Phosphorylated on Thr-1662 by Rho-kinase. Its phosphorylation by Rho-kinase inhibits its guanine nucleotide exchange activity, its interaction with MAP1A, MAP1B, PARP1 and YWHAE and reduces its ability to promote neurite growth. As to expression, expressed in fetal brain (at protein level). Expressed in the olfactory bulb, cortical plate of the cerebral cortex, caudate putamen, hippocampus, ependymal cells of the lateral surface of the lateral ventricles of the brain. Weakly expressed in heart, lung, liver, skeletal muscle, kidney and testis.

Its subcellular location is the cytoplasm. The protein resides in the cell projection. The protein localises to the lamellipodium. It localises to the filopodium. It is found in the growth cone. Its subcellular location is the neuron projection. The protein resides in the perikaryon. In terms of biological role, modulates the activity of RHO-like proteins and connects extracellular signals to cytoskeletal activities. Acts as a GDP-dissociation stimulator protein that stimulates the GDP-GTP exchange activity of RHO-like GTPases and activates them. Activates specifically RAC1, but not CDC42 and RHOA. Mediates extracellular laminin signals to activate Rac1, contributing to neurite growth. Involved in lamellipodial formation and advancement of the growth cone of embryonic hippocampal neurons. Promotes migration of neurons in the cerebral cortex. When overexpressed, induces membrane ruffling accompanied by the accumulation of actin filaments along the altered plasma membrane. This chain is Rho guanine nucleotide exchange factor TIAM2, found in Mus musculus (Mouse).